Here is a 910-residue protein sequence, read N- to C-terminus: DnaJ-like protein MG200 homolog (910 aa).

Residues 4–73 (AKRDYYEVLG…RANYDKYGHD (70 aa)) enclose the J domain. Disordered stretches follow at residues 102–160 (DNLS…DDIP), 260–408 (TEPS…LEQD), and 451–486 (VLSD…STAP). Residues 111 to 121 (KKEKTKTKKKG) are compositionally biased toward basic residues. Low complexity predominate over residues 273 to 283 (DSDAVTAATTV). Over residues 357 to 379 (SDEADATNEPTEQDTISEPEQET) the composition is skewed to acidic residues. Over residues 451-462 (VLSDQNPNPQTP) the composition is skewed to polar residues.

This Mycoplasma pneumoniae (strain ATCC 29342 / M129 / Subtype 1) (Mycoplasmoides pneumoniae) protein is DnaJ-like protein MG200 homolog.